A 96-amino-acid chain; its full sequence is Histone-like protein p6 (96 aa).

The DNA-binding element occupies M1–M19.

The protein belongs to the phi29likevirus histone-like protein p6 family. As to quaternary structure, homodimer. Homomultimer. Binds to double-stranded DNA giving rise to multimeric nucleoprotein complexes. Binding specificity for the viral DNA is based on supercoiling, the viral genome having a negative superhelicity lower than that of plasmid DNA. Interacts with the DNA replication protein p17; this interaction optimizes the binding of protein p6 at the viral DNA ends, thus favoring the initiation of replication.

Histone-like nucleoprotein that binds to the viral dsDNA and responsible for wrapping and compacting the viral DNA about 4-fold. Forms a nucleoprotein complex in which the DNA adopts a right-handed toroidal conformation winding around a protein core. Binds ito most, if not all, the viral genome, although with different affinity, the highest one corresponding to the genome ends. The formation of the nucleoprotein complex at the genome ends, activates the initiation of viral DNA replication. The binding of p6 would recruit the complex formed by the TP and the DNA polymerase to the origin. Protein p6 also represses early transcription from promoter C2, and, together with protein p4, represses transcription from promoters A2b and A2c and activates late transcription from promoter A3. Protein p6 is therefore involved in the early to late transcription switch. The formation of the nucleoprotein complex at the right end of the phage genome where the early promoter C2 is located affects local topology, which may contribute to the promoter repression. The chain is Histone-like protein p6 (6) from Bacillus phage PZA (Bacteriophage PZA).